The primary structure comprises 104 residues: Circadian clock oscillator protein KaiB (104 aa).

This sequence belongs to the KaiB family. The KaiABC complex composition changes during the circadian cycle to control KaiC phosphorylation. Complexes KaiC(6), KaiA(2-4):KaiC(6), KaiB(6):KaiC(6) and KaiC(6):KaiB(6):KaiA(12) are among the most important forms, many form cooperatively. Undergoes a major conformational rearrangment; in the free state forms homotetramers as a dimer of dimers. When bound to the CI domain of KaiC switches to a monomeric thioredoxin-fold (KaiB(fs)). KaiB(fs) binds CikA, leading it to dephosphorylate phospho-RpaA.

Key component of the KaiABC oscillator complex, which constitutes the main circadian regulator in cyanobacteria. Complex composition changes during the circadian cycle to control KaiC phosphorylation. KaiA stimulates KaiC autophosphorylation, while KaiB sequesters KaiA, leading to KaiC autodephosphorylation. Phospho-Ser-431 KaiC accumulation triggers binding of KaiB to form the KaiB(6):KaiC(6) complex, leading to changes in output regulators CikA and SasA. KaiB switches to a thioredoxin-like fold (KaiB(fs)) when bound to KaiC. KaiB(6):KaiC(6) formation exposes a site for KaiA binding that sequesters KaiA from KaiC, making the KaiC(6):KaiB(6):KaiA(12) complex that results in KaiC autodephosphorylation. In terms of biological role, a metamorphic protein which reversibly switches between an inactive tetrameric fold and a rare, thioredoxin-like monomeric fold (KaiB(fs)). KaiB(fs) binds phospho-KaiC, KaiA and CikA. KaiA and CikA compete for binding to KaiB(fs), and KaiB(fs) and SasA compete for binding to KaiC, thus the clock oscillator and output signal pathway are tightly coupled. This is Circadian clock oscillator protein KaiB from Picosynechococcus sp. (strain ATCC 27264 / PCC 7002 / PR-6) (Agmenellum quadruplicatum).